The sequence spans 146 residues: Anti-sigma F factor (146 aa).

This sequence belongs to the anti-sigma-factor family.

It carries out the reaction L-seryl-[protein] + ATP = O-phospho-L-seryl-[protein] + ADP + H(+). It catalyses the reaction L-threonyl-[protein] + ATP = O-phospho-L-threonyl-[protein] + ADP + H(+). Its function is as follows. Binds to sigma F and blocks its ability to form an RNA polymerase holoenzyme (E-sigma F). Phosphorylates SpoIIAA on a serine residue. This phosphorylation may enable SpoIIAA to act as an anti-anti-sigma factor that counteracts SpoIIAB and thus releases sigma F from inhibition. The protein is Anti-sigma F factor of Bacillus velezensis (strain DSM 23117 / BGSC 10A6 / LMG 26770 / FZB42) (Bacillus amyloliquefaciens subsp. plantarum).